We begin with the raw amino-acid sequence, 235 residues long: Segregation and condensation protein A (235 aa).

It belongs to the ScpA family. In terms of assembly, component of a cohesin-like complex composed of ScpA, ScpB and the Smc homodimer, in which ScpA and ScpB bind to the head domain of Smc. The presence of the three proteins is required for the association of the complex with DNA.

It localises to the cytoplasm. Its function is as follows. Participates in chromosomal partition during cell division. May act via the formation of a condensin-like complex containing Smc and ScpB that pull DNA away from mid-cell into both cell halves. This is Segregation and condensation protein A from Streptococcus uberis (strain ATCC BAA-854 / 0140J).